A 39-amino-acid chain; its full sequence is Cecropin-D-like peptide (39 aa).

In terms of tissue distribution, hemolymph.

Its subcellular location is the secreted. Functionally, cecropins have lytic and antibacterial activity against several Gram-positive and Gram-negative bacteria. Has antibacterial activity against the Gram-positive bacteria M.luteus (MIC=34.4 uM), L.monocytogenes (MIC=34.4 uM), and S.lutea (MIC=34.4 uM), and the Gram-negative bacterium E.coli D31 (MIC=8.6 uM). Lacks antibacterial activity against the Gram-positive bacterium B.circulans, and the Gram-negative bacteria E.coli ATCC 25922 and S.typhimurium. Has antifungal activity against A.niger, but lacks antifungal activity against C.albicans, C.wickerhamii, F.oxysporum, P.pastoris, P.tannophilus, S.cerevisiae, T.harzianum, and Z.marxianus. This Galleria mellonella (Greater wax moth) protein is Cecropin-D-like peptide.